The chain runs to 194 residues: ATP-dependent Clp protease proteolytic subunit (194 aa).

Ser98 serves as the catalytic Nucleophile. His123 is an active-site residue.

This sequence belongs to the peptidase S14 family. Fourteen ClpP subunits assemble into 2 heptameric rings which stack back to back to give a disk-like structure with a central cavity, resembling the structure of eukaryotic proteasomes.

The protein localises to the cytoplasm. It carries out the reaction Hydrolysis of proteins to small peptides in the presence of ATP and magnesium. alpha-casein is the usual test substrate. In the absence of ATP, only oligopeptides shorter than five residues are hydrolyzed (such as succinyl-Leu-Tyr-|-NHMec, and Leu-Tyr-Leu-|-Tyr-Trp, in which cleavage of the -Tyr-|-Leu- and -Tyr-|-Trp bonds also occurs).. Its function is as follows. Cleaves peptides in various proteins in a process that requires ATP hydrolysis. Has a chymotrypsin-like activity. Plays a major role in the degradation of misfolded proteins. In Clostridium kluyveri (strain NBRC 12016), this protein is ATP-dependent Clp protease proteolytic subunit.